We begin with the raw amino-acid sequence, 418 residues long: UDP-N-acetylglucosamine 1-carboxyvinyltransferase 2 (418 aa).

Lys22 to Asn23 is a binding site for phosphoenolpyruvate. Residue Arg93 participates in UDP-N-acetyl-alpha-D-glucosamine binding. The active-site Proton donor is the Cys117. At Cys117 the chain carries 2-(S-cysteinyl)pyruvic acid O-phosphothioketal. UDP-N-acetyl-alpha-D-glucosamine contacts are provided by residues Arg122 to Gln126, Asp305, and Ile327.

The protein belongs to the EPSP synthase family. MurA subfamily.

The protein resides in the cytoplasm. The catalysed reaction is phosphoenolpyruvate + UDP-N-acetyl-alpha-D-glucosamine = UDP-N-acetyl-3-O-(1-carboxyvinyl)-alpha-D-glucosamine + phosphate. It participates in cell wall biogenesis; peptidoglycan biosynthesis. Its function is as follows. Cell wall formation. Adds enolpyruvyl to UDP-N-acetylglucosamine. This Clostridium acetobutylicum (strain ATCC 824 / DSM 792 / JCM 1419 / IAM 19013 / LMG 5710 / NBRC 13948 / NRRL B-527 / VKM B-1787 / 2291 / W) protein is UDP-N-acetylglucosamine 1-carboxyvinyltransferase 2.